The primary structure comprises 558 residues: CTP synthase (558 aa).

The interval Met-1 to Leu-267 is amidoligase domain. Residue Ser-13 participates in CTP binding. Ser-13 is a binding site for UTP. Residues Ser-14 to Ile-19 and Asp-71 each bind ATP. Positions 71 and 141 each coordinate Mg(2+). CTP-binding positions include Asp-148–Glu-150, Lys-188–Gln-193, and Lys-224. UTP contacts are provided by residues Lys-188–Gln-193 and Lys-224. The Glutamine amidotransferase type-1 domain occupies Lys-292–Ala-534. Residue Gly-354 participates in L-glutamine binding. Catalysis depends on Cys-381, which acts as the Nucleophile; for glutamine hydrolysis. L-glutamine contacts are provided by residues Leu-382–Gln-385, Glu-405, and Arg-462. Active-site residues include His-507 and Glu-509. Positions Pro-536–Gly-558 are disordered. The segment covering Arg-542 to Gly-558 has biased composition (polar residues).

This sequence belongs to the CTP synthase family. As to quaternary structure, homotetramer.

It catalyses the reaction UTP + L-glutamine + ATP + H2O = CTP + L-glutamate + ADP + phosphate + 2 H(+). It carries out the reaction L-glutamine + H2O = L-glutamate + NH4(+). The enzyme catalyses UTP + NH4(+) + ATP = CTP + ADP + phosphate + 2 H(+). Its pathway is pyrimidine metabolism; CTP biosynthesis via de novo pathway; CTP from UDP: step 2/2. Its activity is regulated as follows. Allosterically activated by GTP, when glutamine is the substrate; GTP has no effect on the reaction when ammonia is the substrate. The allosteric effector GTP functions by stabilizing the protein conformation that binds the tetrahedral intermediate(s) formed during glutamine hydrolysis. Inhibited by the product CTP, via allosteric rather than competitive inhibition. Catalyzes the ATP-dependent amination of UTP to CTP with either L-glutamine or ammonia as the source of nitrogen. Regulates intracellular CTP levels through interactions with the four ribonucleotide triphosphates. This is CTP synthase from Prochlorococcus marinus (strain MIT 9313).